A 595-amino-acid polypeptide reads, in one-letter code: Alpha-1,3-galactosidase B (595 aa).

Positions 1–22 (MKTILLFALSLLLSLSVSDVCA) are cleaved as a signal peptide. PbH1 repeat units follow at residues 432-454 (TPEVLFAGNTIRNNRARGTLFST), 455-477 (PKKTVVEDNLFDHTSGTAILLCG), and 488-541 (CRDV…VIED).

This sequence belongs to the glycosyl hydrolase 110 family. B subfamily.

The catalysed reaction is Hydrolysis of terminal, non-reducing branched (1-&gt;3)-alpha-D-galactosidic residues, producing free D-galactose.. The enzyme catalyses Hydrolysis of terminal, non-reducing linear (1-&gt;3)-alpha-D-galactosidic residues, producing free D-galactose.. It catalyses the reaction Hydrolysis of terminal, non-reducing alpha-D-galactose residues in alpha-D-galactosides, including galactose oligosaccharides, galactomannans and galactolipids.. Alpha-galactosidase. Removes both branched alpha-1,3-linked galactose residues of blood group B antigens and linear alpha-1,3-linked galactose structures. The polypeptide is Alpha-1,3-galactosidase B (glaB) (Bacteroides fragilis (strain ATCC 25285 / DSM 2151 / CCUG 4856 / JCM 11019 / LMG 10263 / NCTC 9343 / Onslow / VPI 2553 / EN-2)).